The primary structure comprises 155 residues: Cathelicidin-1 (155 aa).

The signal sequence occupies residues 1-29 (METQRASLSLGRCSLWLLLLGLALPSASA). A Pyrrolidone carboxylic acid modification is found at Gln30. Positions 30 to 143 (QVLSYREAVL…KQPWAPPQAA (114 aa)) are excised as a propeptide. 3 disulfides stabilise this stretch: Cys85–Cys96, Cys107–Cys124, and Cys146–Cys154.

It belongs to the cathelicidin family.

The protein localises to the secreted. Potent microbicidal activity; active against S.aureus and E.coli. The chain is Cathelicidin-1 (CATHL1A) from Ovis aries (Sheep).